A 185-amino-acid chain; its full sequence is Deoxyuridine 5'-triphosphate nucleotidohydrolase (185 aa).

The tract at residues Met1–Gln23 is disordered. Residues Arg95–Gly97, Asn108, Thr112–Asp114, and Lys122 contribute to the substrate site. Residues Asp160–Asp185 form a disordered region. A compositionally biased stretch (gly residues) spans Gly175–Asp185.

The protein belongs to the dUTPase family. Mg(2+) serves as cofactor.

It carries out the reaction dUTP + H2O = dUMP + diphosphate + H(+). The protein operates within pyrimidine metabolism; dUMP biosynthesis; dUMP from dCTP (dUTP route): step 2/2. In terms of biological role, this enzyme is involved in nucleotide metabolism: it produces dUMP, the immediate precursor of thymidine nucleotides and it decreases the intracellular concentration of dUTP so that uracil cannot be incorporated into DNA. The sequence is that of Deoxyuridine 5'-triphosphate nucleotidohydrolase from Bartonella quintana (strain Toulouse) (Rochalimaea quintana).